The primary structure comprises 264 residues: Flagellar basal-body rod protein FlgG (264 aa).

The protein belongs to the flagella basal body rod proteins family. In terms of assembly, the basal body constitutes a major portion of the flagellar organelle and consists of four rings (L,P,S, and M) mounted on a central rod. The rod consists of about 26 subunits of FlgG in the distal portion, and FlgB, FlgC and FlgF are thought to build up the proximal portion of the rod with about 6 subunits each.

The protein localises to the bacterial flagellum basal body. In Bacillus subtilis (strain 168), this protein is Flagellar basal-body rod protein FlgG (flgG).